The following is a 136-amino-acid chain: MLSNPKRTRFRKQHRGRMKGISYRGNHICFGRYALQALEPAWITSRQIEAGRRAMTRNVRRGGKIWVRIFPDKPVTLRPTETRMGSGKGSPEYWVAVVKPGRILYEMSGVAENIARKAISIAASKMPIRTQFIISG.

The protein belongs to the universal ribosomal protein uL16 family. As to quaternary structure, part of the 50S ribosomal subunit.

It localises to the plastid. It is found in the chloroplast. This is Large ribosomal subunit protein uL16c from Citrus sinensis (Sweet orange).